Reading from the N-terminus, the 331-residue chain is tRNA-cytidine(32) 2-sulfurtransferase (331 aa).

Residues 1-33 (MNAPHMNDTAADAATLDDAAAPAGRPALTRREQ) form a disordered region. The span at 8 to 23 (DTAADAATLDDAAAPA) shows a compositional bias: low complexity. The PP-loop motif signature appears at 71–76 (SGGKDS). Residues C146, C149, and C237 each contribute to the [4Fe-4S] cluster site.

It belongs to the TtcA family. In terms of assembly, homodimer. The cofactor is Mg(2+). Requires [4Fe-4S] cluster as cofactor.

The protein localises to the cytoplasm. The catalysed reaction is cytidine(32) in tRNA + S-sulfanyl-L-cysteinyl-[cysteine desulfurase] + AH2 + ATP = 2-thiocytidine(32) in tRNA + L-cysteinyl-[cysteine desulfurase] + A + AMP + diphosphate + H(+). The protein operates within tRNA modification. Its function is as follows. Catalyzes the ATP-dependent 2-thiolation of cytidine in position 32 of tRNA, to form 2-thiocytidine (s(2)C32). The sulfur atoms are provided by the cysteine/cysteine desulfurase (IscS) system. In Burkholderia orbicola (strain MC0-3), this protein is tRNA-cytidine(32) 2-sulfurtransferase.